Consider the following 93-residue polypeptide: Phosphoribosyl-ATP pyrophosphatase (93 aa).

It belongs to the PRA-PH family.

It localises to the cytoplasm. The enzyme catalyses 1-(5-phospho-beta-D-ribosyl)-ATP + H2O = 1-(5-phospho-beta-D-ribosyl)-5'-AMP + diphosphate + H(+). Its pathway is amino-acid biosynthesis; L-histidine biosynthesis; L-histidine from 5-phospho-alpha-D-ribose 1-diphosphate: step 2/9. The chain is Phosphoribosyl-ATP pyrophosphatase (hisE) from Mycobacterium bovis (strain ATCC BAA-935 / AF2122/97).